Consider the following 610-residue polypeptide: E-selectin (610 aa).

The signal sequence occupies residues 1-21 (MIASQFLSALTLVLLIKESGA). The 117-residue stretch at 22-138 (WSYSASTTNM…CNKKKLALCY (117 aa)) folds into the C-type lectin domain. Residues 22–555 (WSYSASTTNM…CEATAKSNIP (534 aa)) are Extracellular-facing. Asn-30 carries N-linked (GlcNAc...) asparagine glycosylation. 19 disulfide bridges follow: Cys-40/Cys-137, Cys-110/Cys-129, Cys-142/Cys-153, Cys-147/Cys-162, Cys-164/Cys-173, Cys-179/Cys-223, Cys-192/Cys-205, Cys-209/Cys-236, Cys-241/Cys-285, Cys-254/Cys-267, Cys-271/Cys-298, Cys-303/Cys-348, Cys-334/Cys-361, Cys-366/Cys-411, Cys-397/Cys-424, Cys-429/Cys-474, Cys-460/Cys-487, Cys-492/Cys-533, and Cys-519/Cys-546. The Ca(2+) site is built by Glu-101, Asn-103, and Glu-108. A carbohydrate contacts are provided by residues 101–108 (EPNNKQNE), 112–117 (EIYIKR), and 125–127 (NDE). 2 residues coordinate Ca(2+): Asn-125 and Asp-126. An EGF-like domain is found at 139–174 (TAACTHTSCSGHGECVETINNYTCQCHPGFTGLRCE). Residue Asn-159 is glycosylated (N-linked (GlcNAc...) asparagine). Sushi domains follow at residues 177–238 (VTCQ…ACHV), 239–300 (VECD…TCKA), 314–363 (VNCS…VCKA), 365–426 (QCKA…TCEA), 428–489 (RCDA…SCQV), and 490–548 (VQCA…TCEA). N-linked (GlcNAc...) asparagine glycosylation is found at Asn-198 and Asn-202. Asn-264 carries N-linked (GlcNAc...) asparagine glycosylation. N-linked (GlcNAc...) asparagine glycans are attached at residues Asn-315, Asn-327, and Asn-331. The N-linked (GlcNAc...) asparagine glycan is linked to Asn-526. A helical membrane pass occupies residues 556-577 (LTVGLSAAGTSLLTLASFLFWL). The Cytoplasmic segment spans residues 578–610 (LKRLRRKAKKFVPASSYQSLQSDGSYQMPSESA).

The protein belongs to the selectin/LECAM family. As to quaternary structure, interacts with SELPLG/PSGL1 and PODXL2 through the sialyl Lewis X epitope. SELPLG sulfation appears not to be required for this interaction.

It localises to the cell membrane. Its function is as follows. Cell-surface glycoprotein having a role in immunoadhesion. Mediates in the adhesion of blood neutrophils in cytokine-activated endothelium through interaction with SELPLG/PSGL1. May have a role in capillary morphogenesis. The polypeptide is E-selectin (SELE) (Equus caballus (Horse)).